A 553-amino-acid chain; its full sequence is MREYLTEHIKQALHKASIPASRAIKIEKPSDSRFGDFSTNIALVLAGECGMNPRQLAQKITENLSFSETTVSKTEIAGPGFINFYLEPAFIMKQVEQIITSSDRFGRGAAGEGKNAIVEYVSANPTGPLTIGRGRGGVLGDCIANILEAHGYTVTREYYFNDAGRQMSILSESVRLRYIELCGIAVEFPETHYQGDYIREIAAAILEKHGEKLVESDSTELFKQTAETHIFTHIKNTLHRLDITHDSYFNEHRLYQEDESGISPNQQVIDALRQKGFIDHYDGATWFMTTRLGQEKDKVLVKSSGEPSYRLPDIAYHVTKFERGFDEIVNIFGADHIDEYPDVIEALKILGYDTDRIRVAINQFVTTTVNGETVKMSTRKGNADLLDDLIDDVGADATRLFFIMRSKDSHLNFDIDLAKKQSKDNPVFYLQYAHARICSLLRIAENEAGFSLEEGSADAHLMGKLTSAHEIQLGFTLLDYPDVIQTCARILEPQKMVEYLHSVAELYHRFYQECPILKADPDIRSARLILSLATRQVLRNGFRILGISAPKSM.

The 'HIGH' region signature appears at Ala-123–Arg-133.

The protein belongs to the class-I aminoacyl-tRNA synthetase family. Monomer.

It is found in the cytoplasm. It carries out the reaction tRNA(Arg) + L-arginine + ATP = L-arginyl-tRNA(Arg) + AMP + diphosphate. The sequence is that of Arginine--tRNA ligase from Chlorobium phaeobacteroides (strain BS1).